A 117-amino-acid chain; its full sequence is Large ribosomal subunit protein uL18 (117 aa).

This sequence belongs to the universal ribosomal protein uL18 family. As to quaternary structure, part of the 50S ribosomal subunit; part of the 5S rRNA/L5/L18/L25 subcomplex. Contacts the 5S and 23S rRNAs.

This is one of the proteins that bind and probably mediate the attachment of the 5S RNA into the large ribosomal subunit, where it forms part of the central protuberance. This chain is Large ribosomal subunit protein uL18, found in Pectobacterium carotovorum subsp. carotovorum (strain PC1).